A 297-amino-acid polypeptide reads, in one-letter code: 3-methyl-2-oxobutanoate hydroxymethyltransferase (297 aa).

Over residues 1–15 the composition is skewed to polar residues; the sequence is MSEQISEQSEQNVYG. The segment at 1–40 is disordered; the sequence is MSEQISEQSEQNVYGASSPVPAGESSPSAASAPRTKVRTH. The span at 16-33 shows a compositional bias: low complexity; it reads ASSPVPAGESSPSAASAP. Asp-78 and Asp-117 together coordinate Mg(2+). Residues 78–79, Asp-117, and Lys-147 contribute to the 3-methyl-2-oxobutanoate site; that span reads DS. Residue Glu-149 coordinates Mg(2+). Glu-215 functions as the Proton acceptor in the catalytic mechanism.

Belongs to the PanB family. Homodecamer; pentamer of dimers. Mg(2+) serves as cofactor.

Its subcellular location is the cytoplasm. The enzyme catalyses 3-methyl-2-oxobutanoate + (6R)-5,10-methylene-5,6,7,8-tetrahydrofolate + H2O = 2-dehydropantoate + (6S)-5,6,7,8-tetrahydrofolate. It participates in cofactor biosynthesis; (R)-pantothenate biosynthesis; (R)-pantoate from 3-methyl-2-oxobutanoate: step 1/2. In terms of biological role, catalyzes the reversible reaction in which hydroxymethyl group from 5,10-methylenetetrahydrofolate is transferred onto alpha-ketoisovalerate to form ketopantoate. The chain is 3-methyl-2-oxobutanoate hydroxymethyltransferase from Mycobacterium marinum (strain ATCC BAA-535 / M).